The primary structure comprises 335 residues: Foldase protein PrsA (335 aa).

A signal peptide spans 1–20; sequence MKKKIFAGAVTLLSVAVLAA. The N-palmitoyl cysteine moiety is linked to residue Cys-21. A lipid anchor (S-diacylglycerol cysteine) is attached at Cys-21. A PpiC domain is found at 142–239; that stretch reads TPEVTAQIIK…ASYYIVKLVK (98 aa). Residues 300-335 are disordered; it reads TGSSTSSSSAASSSKTSESSSAAESSSKEASSSAAE. Over residues 302–335 the composition is skewed to low complexity; the sequence is SSTSSSSAASSSKTSESSSAAESSSKEASSSAAE.

This sequence belongs to the PrsA family.

Its subcellular location is the cell membrane. It carries out the reaction [protein]-peptidylproline (omega=180) = [protein]-peptidylproline (omega=0). In terms of biological role, plays a major role in protein secretion by helping the post-translocational extracellular folding of several secreted proteins. The sequence is that of Foldase protein PrsA from Streptococcus sanguinis (strain SK36).